The chain runs to 206 residues: Phosphatidyl-N-methylethanolamine N-methyltransferase (206 aa).

Topologically, residues 1-20 (MKESVQEIIQQLIHSVDLQS) are lumenal. An intramembrane region (helical) is located at residues 21 to 41 (SKFQLAIVCTMFNPIFWNIVA). Topologically, residues 42 to 53 (RMEYHKHSLTKM) are lumenal. Residues 54–74 (CGGARKGCYMLAATIFSLGIV) traverse the membrane as a helical segment. Over 75-101 (RDMVYESALREQPTCSLITGENWTKLG) the chain is Cytoplasmic. The helical transmembrane segment at 102-122 (VALFGLGQVLVLSSMYKLGIT) threads the bilayer. Residue 106-108 (GLG) coordinates S-adenosyl-L-methionine. The Lumenal segment spans residues 123-165 (GTYLGDYFGILMDERVTGFPFNVSNNPMYQGSTLSFLGIALYK). Residues 166–186 (GKPAGLVVSAVVYFMYKIALR) traverse the membrane as a helical segment. The Cytoplasmic segment spans residues 187-206 (WEEPFTAMIYANRDKAKKNM). 188–189 (EE) contributes to the S-adenosyl-L-methionine binding site.

It belongs to the class VI-like SAM-binding methyltransferase superfamily. PEMT/PEM2 methyltransferase family.

The protein localises to the endoplasmic reticulum membrane. Its subcellular location is the mitochondrion membrane. It catalyses the reaction a 1,2-diacyl-sn-glycero-3-phosphoethanolamine + S-adenosyl-L-methionine = a 1,2-diacyl-sn-glycero-3-phospho-N-methylethanolamine + S-adenosyl-L-homocysteine + H(+). The enzyme catalyses a 1,2-diacyl-sn-glycero-3-phospho-N-methylethanolamine + S-adenosyl-L-methionine = a 1,2-diacyl-sn-glycero-3-phospho-N,N-dimethylethanolamine + S-adenosyl-L-homocysteine + H(+). It carries out the reaction a 1,2-diacyl-sn-glycero-3-phospho-N,N-dimethylethanolamine + S-adenosyl-L-methionine = a 1,2-diacyl-sn-glycero-3-phosphocholine + S-adenosyl-L-homocysteine + H(+). The protein operates within phospholipid metabolism; phosphatidylcholine biosynthesis. Functionally, catalyzes the second two steps of the methylation pathway of phosphatidylcholine biosynthesis, the SAM-dependent methylation of phosphatidylmonomethylethanolamine (PMME) to phosphatidyldimethylethanolamine (PDME) and of PDME to phosphatidylcholine (PC). Can also catalyze the first methylation reaction of PE to PMME in the absence of PE methyltransferase CHO2. This chain is Phosphatidyl-N-methylethanolamine N-methyltransferase, found in Saccharomyces cerevisiae (strain ATCC 204508 / S288c) (Baker's yeast).